The following is a 163-amino-acid chain: SsrA-binding protein (163 aa).

Basic and acidic residues predominate over residues 135–156 (GKKEHDKRDDTKEREWKIEKSR). The segment at 135–163 (GKKEHDKRDDTKEREWKIEKSRTMKHAAR) is disordered.

It belongs to the SmpB family.

It localises to the cytoplasm. Required for rescue of stalled ribosomes mediated by trans-translation. Binds to transfer-messenger RNA (tmRNA), required for stable association of tmRNA with ribosomes. tmRNA and SmpB together mimic tRNA shape, replacing the anticodon stem-loop with SmpB. tmRNA is encoded by the ssrA gene; the 2 termini fold to resemble tRNA(Ala) and it encodes a 'tag peptide', a short internal open reading frame. During trans-translation Ala-aminoacylated tmRNA acts like a tRNA, entering the A-site of stalled ribosomes, displacing the stalled mRNA. The ribosome then switches to translate the ORF on the tmRNA; the nascent peptide is terminated with the 'tag peptide' encoded by the tmRNA and targeted for degradation. The ribosome is freed to recommence translation, which seems to be the essential function of trans-translation. This is SsrA-binding protein from Shewanella loihica (strain ATCC BAA-1088 / PV-4).